The sequence spans 585 residues: uncharacterized protein (585 aa).

The interval 27–59 (DDSERSVKSVSVSISDDEDSKTDVQDNMATPST) is disordered.

This is an uncharacterized protein from Saccharomyces cerevisiae (strain ATCC 204508 / S288c) (Baker's yeast).